The chain runs to 104 residues: L-rhamnose mutarotase (104 aa).

Residue tyrosine 18 participates in substrate binding. Catalysis depends on histidine 22, which acts as the Proton donor. Residues tyrosine 41 and 76 to 77 contribute to the substrate site; that span reads WW.

It belongs to the rhamnose mutarotase family. In terms of assembly, homodimer.

It localises to the cytoplasm. The catalysed reaction is alpha-L-rhamnose = beta-L-rhamnose. It participates in carbohydrate metabolism; L-rhamnose metabolism. Its function is as follows. Involved in the anomeric conversion of L-rhamnose. The polypeptide is L-rhamnose mutarotase (Escherichia coli O1:K1 / APEC).